Consider the following 306-residue polypeptide: Glutaminase (306 aa).

Substrate contacts are provided by Ser64, Asn115, Glu159, Asn166, Tyr190, Tyr242, and Val260.

The protein belongs to the glutaminase family. Homotetramer.

It catalyses the reaction L-glutamine + H2O = L-glutamate + NH4(+). This chain is Glutaminase, found in Vibrio cholerae serotype O1 (strain ATCC 39541 / Classical Ogawa 395 / O395).